The sequence spans 749 residues: NAD(P)H-quinone oxidoreductase subunit 5, chloroplastic (749 aa).

Transmembrane regions (helical) follow at residues tryptophan 9 to phenylalanine 29, tryptophan 40 to isoleucine 60, isoleucine 89 to isoleucine 109, phenylalanine 125 to isoleucine 145, isoleucine 147 to threonine 167, glycine 185 to phenylalanine 205, asparagine 221 to alanine 241, threonine 260 to alanine 280, leucine 285 to leucine 305, leucine 329 to isoleucine 349, alanine 356 to serine 376, asparagine 398 to serine 418, tryptophan 427 to tyrosine 447, leucine 553 to phenylalanine 573, phenylalanine 607 to leucine 627, and serine 727 to leucine 747.

Belongs to the complex I subunit 5 family. NDH is composed of at least 16 different subunits, 5 of which are encoded in the nucleus.

The protein localises to the plastid. It is found in the chloroplast thylakoid membrane. The enzyme catalyses a plastoquinone + NADH + (n+1) H(+)(in) = a plastoquinol + NAD(+) + n H(+)(out). It catalyses the reaction a plastoquinone + NADPH + (n+1) H(+)(in) = a plastoquinol + NADP(+) + n H(+)(out). NDH shuttles electrons from NAD(P)H:plastoquinone, via FMN and iron-sulfur (Fe-S) centers, to quinones in the photosynthetic chain and possibly in a chloroplast respiratory chain. The immediate electron acceptor for the enzyme in this species is believed to be plastoquinone. Couples the redox reaction to proton translocation, and thus conserves the redox energy in a proton gradient. This is NAD(P)H-quinone oxidoreductase subunit 5, chloroplastic (ndhF) from Vitis vinifera (Grape).